The primary structure comprises 190 residues: Probable nicotinate-nucleotide adenylyltransferase (190 aa).

The protein belongs to the NadD family.

The enzyme catalyses nicotinate beta-D-ribonucleotide + ATP + H(+) = deamido-NAD(+) + diphosphate. Its pathway is cofactor biosynthesis; NAD(+) biosynthesis; deamido-NAD(+) from nicotinate D-ribonucleotide: step 1/1. Its function is as follows. Catalyzes the reversible adenylation of nicotinate mononucleotide (NaMN) to nicotinic acid adenine dinucleotide (NaAD). This chain is Probable nicotinate-nucleotide adenylyltransferase, found in Staphylococcus saprophyticus subsp. saprophyticus (strain ATCC 15305 / DSM 20229 / NCIMB 8711 / NCTC 7292 / S-41).